The primary structure comprises 85 residues: MYIIVVYDVSVERVNRVKKFLRQHLHWVQNSVFEGEVTLAEFERIKAGIGELIDGDEDSVVIYKLRSMPKREVMGVEKNPIEDII.

Aspartate 8 contributes to the Mg(2+) binding site.

It belongs to the CRISPR-associated endoribonuclease Cas2 protein family. As to quaternary structure, homodimer, forms a heterotetramer with a Cas1 homodimer. It depends on Mg(2+) as a cofactor.

CRISPR (clustered regularly interspaced short palindromic repeat), is an adaptive immune system that provides protection against mobile genetic elements (viruses, transposable elements and conjugative plasmids). CRISPR clusters contain sequences complementary to antecedent mobile elements and target invading nucleic acids. CRISPR clusters are transcribed and processed into CRISPR RNA (crRNA). Functions as a ssRNA-specific endoribonuclease. Involved in the integration of spacer DNA into the CRISPR cassette. The protein is CRISPR-associated endoribonuclease Cas2 of Thermococcus kodakarensis (strain ATCC BAA-918 / JCM 12380 / KOD1) (Pyrococcus kodakaraensis (strain KOD1)).